Consider the following 144-residue polypeptide: 3-dehydroquinate dehydratase (144 aa).

Y22 serves as the catalytic Proton acceptor. Substrate is bound by residues N73, H79, and D86. The Proton donor role is filled by H99. Substrate-binding positions include 100 to 101 (LS) and R110.

This sequence belongs to the type-II 3-dehydroquinase family. Homododecamer.

It carries out the reaction 3-dehydroquinate = 3-dehydroshikimate + H2O. Its pathway is metabolic intermediate biosynthesis; chorismate biosynthesis; chorismate from D-erythrose 4-phosphate and phosphoenolpyruvate: step 3/7. Its function is as follows. Catalyzes a trans-dehydration via an enolate intermediate. The protein is 3-dehydroquinate dehydratase of Geotalea daltonii (strain DSM 22248 / JCM 15807 / FRC-32) (Geobacter daltonii).